A 216-amino-acid polypeptide reads, in one-letter code: Small ribosomal subunit protein uS3c (216 aa).

Positions 43–118 (IKNYIQKNRR…RLKIAITRVE (76 aa)) constitute a KH type-2 domain.

The protein belongs to the universal ribosomal protein uS3 family. As to quaternary structure, part of the 30S ribosomal subunit.

The protein localises to the plastid. It is found in the chloroplast. The chain is Small ribosomal subunit protein uS3c (rps3) from Dioscorea elephantipes (Elephant's foot yam).